We begin with the raw amino-acid sequence, 726 residues long: Ribonuclease R (726 aa).

The region spanning 264–592 (RKDLTELAFV…TVHRLLWMNL (329 aa)) is the RNB domain. Positions 645-726 (GQTFHGFISA…VQKRAILTLV (82 aa)) constitute an S1 motif domain.

This sequence belongs to the RNR ribonuclease family. RNase R subfamily.

Its subcellular location is the cytoplasm. The catalysed reaction is Exonucleolytic cleavage in the 3'- to 5'-direction to yield nucleoside 5'-phosphates.. In terms of biological role, 3'-5' exoribonuclease that releases 5'-nucleoside monophosphates and is involved in maturation of structured RNAs. The polypeptide is Ribonuclease R (Mycoplasma pneumoniae (strain ATCC 29342 / M129 / Subtype 1) (Mycoplasmoides pneumoniae)).